The chain runs to 387 residues: UDP-N-acetylglucosamine--N-acetylmuramyl-(pentapeptide) pyrophosphoryl-undecaprenol N-acetylglucosamine transferase (387 aa).

UDP-N-acetyl-alpha-D-glucosamine is bound by residues threonine 26–glycine 28, asparagine 137, arginine 177, serine 205, and glutamine 306.

Belongs to the glycosyltransferase 28 family. MurG subfamily.

Its subcellular location is the cell inner membrane. It catalyses the reaction di-trans,octa-cis-undecaprenyl diphospho-N-acetyl-alpha-D-muramoyl-L-alanyl-D-glutamyl-meso-2,6-diaminopimeloyl-D-alanyl-D-alanine + UDP-N-acetyl-alpha-D-glucosamine = di-trans,octa-cis-undecaprenyl diphospho-[N-acetyl-alpha-D-glucosaminyl-(1-&gt;4)]-N-acetyl-alpha-D-muramoyl-L-alanyl-D-glutamyl-meso-2,6-diaminopimeloyl-D-alanyl-D-alanine + UDP + H(+). It functions in the pathway cell wall biogenesis; peptidoglycan biosynthesis. Functionally, cell wall formation. Catalyzes the transfer of a GlcNAc subunit on undecaprenyl-pyrophosphoryl-MurNAc-pentapeptide (lipid intermediate I) to form undecaprenyl-pyrophosphoryl-MurNAc-(pentapeptide)GlcNAc (lipid intermediate II). This chain is UDP-N-acetylglucosamine--N-acetylmuramyl-(pentapeptide) pyrophosphoryl-undecaprenol N-acetylglucosamine transferase, found in Rhodospirillum rubrum (strain ATCC 11170 / ATH 1.1.1 / DSM 467 / LMG 4362 / NCIMB 8255 / S1).